The following is a 129-amino-acid chain: Small ribosomal subunit protein uS11 (129 aa).

It belongs to the universal ribosomal protein uS11 family. As to quaternary structure, part of the 30S ribosomal subunit. Interacts with proteins S7 and S18. Binds to IF-3.

Its function is as follows. Located on the platform of the 30S subunit, it bridges several disparate RNA helices of the 16S rRNA. Forms part of the Shine-Dalgarno cleft in the 70S ribosome. The sequence is that of Small ribosomal subunit protein uS11 from Novosphingobium aromaticivorans (strain ATCC 700278 / DSM 12444 / CCUG 56034 / CIP 105152 / NBRC 16084 / F199).